The chain runs to 163 residues: Shikimate kinase (163 aa).

Position 10–15 (10–15 (GVGKTT)) interacts with ATP. Mg(2+) is bound at residue Thr-14. Residues Asp-28, Arg-52, and Gly-75 each contribute to the substrate site. Residue Arg-116 coordinates ATP. Position 134 (Arg-134) interacts with substrate.

Belongs to the shikimate kinase family. In terms of assembly, monomer. Mg(2+) serves as cofactor.

It is found in the cytoplasm. It carries out the reaction shikimate + ATP = 3-phosphoshikimate + ADP + H(+). The protein operates within metabolic intermediate biosynthesis; chorismate biosynthesis; chorismate from D-erythrose 4-phosphate and phosphoenolpyruvate: step 5/7. Its function is as follows. Catalyzes the specific phosphorylation of the 3-hydroxyl group of shikimic acid using ATP as a cosubstrate. The polypeptide is Shikimate kinase (Streptococcus suis (strain 98HAH33)).